The following is a 139-amino-acid chain: Thioredoxin-like protein Clot (139 aa).

The 136-residue stretch at 1 to 136 folds into the Thioredoxin domain; sequence MTVEKVDATV…LADKVDAVVN (136 aa). Residues C49 and C52 each act as nucleophile in the active site. C49 and C52 are oxidised to a cystine.

Belongs to the thioredoxin family.

Functionally, probable thiol-disulfide oxidoreductase that may participate in various redox reactions. The sequence is that of Thioredoxin-like protein Clot from Oryza sativa subsp. japonica (Rice).